We begin with the raw amino-acid sequence, 447 residues long: Dihydrolipoyllysine-residue acetyltransferase component of pyruvate dehydrogenase complex (447 aa).

The 77-residue stretch at 2–78 (PINITMPALS…KVNALIAVLA (77 aa)) folds into the Lipoyl-binding domain. Position 43 is an N6-lipoyllysine (Lys-43). Residues 91–140 (GNGAAGAVPAPKPKETAETAPAAAPAPAAAPAPQAAAPASPAPADGEGKR) are disordered. Low complexity predominate over residues 108–134 (ETAPAAAPAPAAAPAPQAAAPASPAPA). A Peripheral subunit-binding (PSBD) domain is found at 142 to 179 (FSSPLARRLAKEAGIDLSAIAGSGPHGRVVKKDVETAV). His-420 is a catalytic residue.

Belongs to the 2-oxoacid dehydrogenase family. In terms of assembly, forms a 24-polypeptide structural core with octahedral symmetry. It depends on (R)-lipoate as a cofactor.

It carries out the reaction N(6)-[(R)-dihydrolipoyl]-L-lysyl-[protein] + acetyl-CoA = N(6)-[(R)-S(8)-acetyldihydrolipoyl]-L-lysyl-[protein] + CoA. Functionally, the pyruvate dehydrogenase complex catalyzes the overall conversion of pyruvate to acetyl-CoA and CO(2). It contains multiple copies of three enzymatic components: pyruvate dehydrogenase (E1), dihydrolipoamide acetyltransferase (E2) and lipoamide dehydrogenase (E3). This is Dihydrolipoyllysine-residue acetyltransferase component of pyruvate dehydrogenase complex (pdhC) from Rhizobium meliloti (strain 1021) (Ensifer meliloti).